The sequence spans 85 residues: Large ribosomal subunit protein bL27 (85 aa).

The disordered stretch occupies residues 1-24 (MAHKKGVGSSRNGRDSDGQRLGCK).

It belongs to the bacterial ribosomal protein bL27 family.

The sequence is that of Large ribosomal subunit protein bL27 from Geotalea daltonii (strain DSM 22248 / JCM 15807 / FRC-32) (Geobacter daltonii).